The following is a 2002-amino-acid chain: [F-actin]-monooxygenase MICAL3 (2002 aa).

Residues 2-494 (EERKHETMNP…RHLYDTGETK (493 aa)) are monooxygenase domain. Residues Cys97, 116–118 (EKR), 123–125 (RNN), Phe183, Tyr298, and Asp398 each bind FAD. Residues 518–624 (VARSSKLLGW…YLTQFYEMFK (107 aa)) enclose the Calponin-homology (CH) domain. Residue Ser649 is modified to Phosphoserine. Residues 658–706 (GQTISRKRSPKDKKEKDLDGAGKRRKTSQSEEEEAPRGHRGERPTLVST) are disordered. Residues 663–684 (RKRSPKDKKEKDLDGAGKRRKT) carry the Nuclear localization signal motif. Residues 669 to 679 (DKKEKDLDGAG) show a composition bias toward basic and acidic residues. Phosphoserine is present on residues Ser685 and Ser687. The LIM zinc-binding domain maps to 762 to 824 (DTCYFCQKRV…KPHYCYRLSG (63 aa)). Zn(2+) contacts are provided by Cys764, Cys767, His785, Cys788, Cys791, Cys794, Cys814, and His817. The interval 835–883 (PLSGKEAKGPLQDGATTDANGRANAVASSTERTPGSGVNGLEEPSIAKR) is disordered. At Thr887 the chain carries Phosphothreonine. Disordered regions lie at residues 907-1313 (QEVP…SPLA), 1335-1776 (RRSL…GKHR), and 1791-1821 (LSFS…TYTE). Over residues 938–950 (SEMEEEGEEEEEE) the composition is skewed to acidic residues. The residue at position 977 (Ser977) is a Phosphoserine. The segment covering 991–1017 (NEEEEEEEEEYEEEEEEDYDEEEEESS) has biased composition (acidic residues). Residues 1041-1054 (HWTHIREREEEERM) are compositionally biased toward basic and acidic residues. Residues 1055–1066 (APASESSASGAP) show a composition bias toward low complexity. The segment covering 1068-1102 (DENDLEEDVDSEPAEIEGEAAEDGDPGDTGAELDD) has biased composition (acidic residues). Phosphoserine is present on residues Ser1134, Ser1143, Ser1160, and Ser1192. Over residues 1150 to 1163 (GPSQATSPIRSPQE) the composition is skewed to polar residues. A compositionally biased stretch (basic and acidic residues) spans 1191-1218 (KSPEERLFPEPLLPKEKPKADAPSDLKA). Positions 1239-1258 (PGSPQPQPPVAASTPPPSPL) are enriched in pro residues. Composition is skewed to polar residues over residues 1268–1280 (TEAT…QSPI) and 1288–1302 (KTST…QSQS). Ser1274 bears the Phosphoserine mark. At Thr1276 the chain carries Phosphothreonine. Ser1278 bears the Phosphoserine mark. Ser1310 and Ser1337 each carry phosphoserine. Thr1341 is modified (phosphothreonine). Residues Ser1371 and Ser1384 each carry the phosphoserine modification. Residues 1407-1422 (PSDRELRSAQEERREL) are compositionally biased toward basic and acidic residues. Over residues 1423–1435 (SSSSGLGLHGSSS) the composition is skewed to low complexity. Ser1433 carries the phosphoserine modification. The span at 1436–1451 (NMKTLGSQSFNTSDSA) shows a compositional bias: polar residues. A Phosphothreonine modification is found at Thr1454. Residues 1456 to 1467 (PSSPPPPPPPGE) show a composition bias toward pro residues. The span at 1516–1530 (SVEEIPFADDVEDTY) shows a compositional bias: acidic residues. The segment covering 1588–1604 (EAKELAEERMRAREKSV) has biased composition (basic and acidic residues). Position 1649 is a phosphoserine (Ser1649). At Thr1651 the chain carries Phosphothreonine. Basic and acidic residues predominate over residues 1657–1668 (GSEEPTLKHEAT). Positions 1674 to 1694 (SPPSDSGGPDGSFTSSEGSSG) are enriched in low complexity. The span at 1695 to 1713 (KSKKRSSLFSPRRNKKEKK) shows a compositional bias: basic residues. 2 positions are modified to phosphoserine: Ser1701 and Ser1704. A compositionally biased stretch (polar residues) spans 1760–1769 (CPSTPSSGAT). The segment covering 1804 to 1820 (VLEKSSQKSRREPRTYT) has biased composition (basic and acidic residues). A coiled-coil region spans residues 1821-1992 (EEELNAKLTR…EEDKDLEAAM (172 aa)). Positions 1841-1990 (KQEELKRLHR…EREEDKDLEA (150 aa)) constitute a bMERB domain. Residue Ser1912 is modified to Phosphoserine.

This sequence belongs to the Mical family. In terms of assembly, interacts with RAB1B, RAB8A, RAB10, RAB13 and RAB15 (in their GTP-bound forms); binding to RAB1B is of low affinity compared to other Rab proteins; at least in case of RAB8A can bind 2 molecules of RAB8A simultaneously through a high and a low affinity binding site, respectively. Interacts with ERC1 and RAB8A; may bridge ERC1 with RAB8A. Interacts with KIF23 and ERC1; enhances the interaction between KIF23 and ERC1. Interacts with NINL isoform 2. It depends on FAD as a cofactor. Ubiquitous.

Its subcellular location is the cytoplasm. The protein resides in the cell cortex. It is found in the cytoskeleton. It localises to the nucleus. The protein localises to the midbody. Its subcellular location is the spindle. The protein resides in the cilium basal body. The enzyme catalyses L-methionyl-[F-actin] + NADPH + O2 + H(+) = L-methionyl-(R)-S-oxide-[F-actin] + NADP(+) + H2O. Functionally, monooxygenase that promotes depolymerization of F-actin by mediating oxidation of specific methionine residues on actin to form methionine-sulfoxide, resulting in actin filament disassembly and preventing repolymerization. In the absence of actin, it also functions as a NADPH oxidase producing H(2)O(2). Seems to act as Rab effector protein and plays a role in vesicle trafficking. Involved in exocytic vesicles tethering and fusion: the monooxygenase activity is required for this process and implicates RAB8A associated with exocytotic vesicles. Required for cytokinesis. Contributes to stabilization and/or maturation of the intercellular bridge independently of its monooxygenase activity. Promotes recruitment of Rab8 and ERC1 to the intercellular bridge, and together these proteins are proposed to function in timely abscission. This Homo sapiens (Human) protein is [F-actin]-monooxygenase MICAL3 (MICAL3).